Here is a 407-residue protein sequence, read N- to C-terminus: NADH dehydrogenase [ubiquinone] 1 alpha subcomplex subunit 10, mitochondrial (407 aa).

The N-terminal 60 residues, 1–60 (MTAVFRVGLVRLVSRATQSPNLLQAQTNALPAAFQQRCSISGKTMRGGPRVPKAAPYPYK), are a transit peptide targeting the mitochondrion.

Belongs to the complex I NDUFA10 subunit family. In terms of assembly, complex I is composed of 45 different subunits. This a component of the hydrophobic protein fraction. Forms a complex including sicily, ND-42 and Hsp83; the complex is necessary to chaperone ND-42 in the cytoplasm before mitochondrial import; the interaction between sicily and ND-42 is direct and occurs preferably between the unprocessed forms in the cytoplasm. The cofactor is FAD. In terms of tissue distribution, expressed in muscles (at protein level).

It is found in the mitochondrion matrix. It localises to the cytoplasm. In terms of biological role, accessory subunit of the mitochondrial membrane respiratory chain NADH dehydrogenase (Complex I), that is believed not to be involved in catalysis. Complex I functions in the transfer of electrons from NADH to the respiratory chain. The immediate electron acceptor for the enzyme is believed to be ubiquinone. The polypeptide is NADH dehydrogenase [ubiquinone] 1 alpha subcomplex subunit 10, mitochondrial (Drosophila melanogaster (Fruit fly)).